Reading from the N-terminus, the 200-residue chain is ATP-dependent Clp protease proteolytic subunit (200 aa).

S105 acts as the Nucleophile in catalysis. H130 is a catalytic residue.

The protein belongs to the peptidase S14 family. Fourteen ClpP subunits assemble into 2 heptameric rings which stack back to back to give a disk-like structure with a central cavity, resembling the structure of eukaryotic proteasomes.

It is found in the cytoplasm. The catalysed reaction is Hydrolysis of proteins to small peptides in the presence of ATP and magnesium. alpha-casein is the usual test substrate. In the absence of ATP, only oligopeptides shorter than five residues are hydrolyzed (such as succinyl-Leu-Tyr-|-NHMec, and Leu-Tyr-Leu-|-Tyr-Trp, in which cleavage of the -Tyr-|-Leu- and -Tyr-|-Trp bonds also occurs).. Its function is as follows. Cleaves peptides in various proteins in a process that requires ATP hydrolysis. Has a chymotrypsin-like activity. Plays a major role in the degradation of misfolded proteins. The chain is ATP-dependent Clp protease proteolytic subunit from Hydrogenovibrio crunogenus (strain DSM 25203 / XCL-2) (Thiomicrospira crunogena).